We begin with the raw amino-acid sequence, 329 residues long: Phosphate acyltransferase (329 aa).

The protein belongs to the PlsX family. In terms of assembly, homodimer. Probably interacts with PlsY.

It is found in the cytoplasm. The enzyme catalyses a fatty acyl-[ACP] + phosphate = an acyl phosphate + holo-[ACP]. It participates in lipid metabolism; phospholipid metabolism. Catalyzes the reversible formation of acyl-phosphate (acyl-PO(4)) from acyl-[acyl-carrier-protein] (acyl-ACP). This enzyme utilizes acyl-ACP as fatty acyl donor, but not acyl-CoA. This is Phosphate acyltransferase from Campylobacter fetus subsp. fetus (strain 82-40).